The chain runs to 297 residues: Probable endonuclease 4 (297 aa).

Residues His-69, His-110, Glu-145, Asp-179, His-182, His-214, Asp-227, His-229, and Glu-259 each coordinate Zn(2+).

This sequence belongs to the AP endonuclease 2 family. Zn(2+) serves as cofactor.

The catalysed reaction is Endonucleolytic cleavage to 5'-phosphooligonucleotide end-products.. In terms of biological role, endonuclease IV plays a role in DNA repair. It cleaves phosphodiester bonds at apurinic or apyrimidinic (AP) sites, generating a 3'-hydroxyl group and a 5'-terminal sugar phosphate. The sequence is that of Probable endonuclease 4 from Listeria welshimeri serovar 6b (strain ATCC 35897 / DSM 20650 / CCUG 15529 / CIP 8149 / NCTC 11857 / SLCC 5334 / V8).